The sequence spans 93 residues: C-C motif chemokine 14 (93 aa).

The signal sequence occupies residues 1–19 (MKISVAAIPFFLLITIALG). Ser-26 carries O-linked (GalNAc...) serine; partial glycosylation. Cystine bridges form between Cys-35/Cys-59 and Cys-36/Cys-75.

This sequence belongs to the intercrine beta (chemokine CC) family. In terms of processing, the N-terminal processed forms HCC-1(3-74), HCC-1(4-74) and HCC-1(9-74) are produced in small amounts by proteolytic cleavage after secretion in blood. Post-translationally, HCC-1(1-74), but not HCC-1(3-74) and HCC-1(4-74), is partially O-glycosylated; the O-linked glycan consists of one Gal-GalNAc disaccharide, further modified by two N-acetylneuraminic acids. As to expression, expressed constitutively in several normal tissues: spleen, liver, skeletal and heart muscle, gut, and bone marrow, present at high concentrations (1-80 nM) in plasma.

The protein localises to the secreted. Its function is as follows. Has weak activities on human monocytes and acts via receptors that also recognize MIP-1 alpha. It induces intracellular Ca(2+) changes and enzyme release, but no chemotaxis, at concentrations of 100-1,000 nM, and is inactive on T-lymphocytes, neutrophils, and eosinophil leukocytes. Enhances the proliferation of CD34 myeloid progenitor cells. The processed form HCC-1(9-74) is a chemotactic factor that attracts monocytes, eosinophils, and T-cells and is a ligand for CCR1, CCR3 and CCR5. The sequence is that of C-C motif chemokine 14 (CCL14) from Homo sapiens (Human).